Consider the following 340-residue polypeptide: Delta(1)-pyrroline-2-carboxylate reductase 2 (340 aa).

Serine 50 (charge relay system) is an active-site residue. Histidine 51 (proton donor) is an active-site residue. Arginine 55 is a substrate binding site. NADP(+) is bound at residue 123-127; sequence HFSAL. Threonine 163 contributes to the substrate binding site. Position 181-183 (181-183) interacts with NADP(+); it reads DFA. 189–190 is a binding site for substrate; it reads RG. Aspartate 191 (charge relay system) is an active-site residue. Residues 232 to 233 and 307 to 313 contribute to the NADP(+) site; these read HK and RLPSQRR.

It belongs to the LDH2/MDH2 oxidoreductase family. As to quaternary structure, homodimer.

It carries out the reaction L-proline + NAD(+) = 1-pyrroline-2-carboxylate + NADH + H(+). The catalysed reaction is L-proline + NADP(+) = 1-pyrroline-2-carboxylate + NADPH + H(+). Functionally, catalyzes the reduction of Delta(1)-pyrroline-2-carboxylate (Pyr2C) to L-proline, using NADPH as the electron donor. May be involved in a degradation pathway that converts trans-3-hydroxy-L-proline (t3LHyp) to L-proline. This Burkholderia multivorans (strain ATCC 17616 / 249) protein is Delta(1)-pyrroline-2-carboxylate reductase 2.